The primary structure comprises 262 residues: Ornithine carbamoyltransferase (262 aa).

Carbamoyl phosphate contacts are provided by residues 3-7 (STRTR), Q30, R54, and 81-84 (HPTQ). Residues N114, D178, and 182–183 (SM) each bind L-ornithine. Residues 219-222 (HCLP) and T247 each bind carbamoyl phosphate.

It belongs to the aspartate/ornithine carbamoyltransferase superfamily. OTCase family.

The protein localises to the cytoplasm. The catalysed reaction is carbamoyl phosphate + L-ornithine = L-citrulline + phosphate + H(+). It participates in amino-acid biosynthesis; L-arginine biosynthesis; L-arginine from L-ornithine and carbamoyl phosphate: step 1/3. Functionally, reversibly catalyzes the transfer of the carbamoyl group from carbamoyl phosphate (CP) to the N(epsilon) atom of ornithine (ORN) to produce L-citrulline. This is Ornithine carbamoyltransferase (argF) from Neisseria polysaccharea.